The following is a 385-amino-acid chain: Zinc finger protein B385R (385 aa).

The C2H2-type zinc-finger motif lies at 166-190 (LQCPNCGCIQELMGTIFDETHFYNH).

The protein belongs to the asfivirus B385R family.

In Ornithodoros (relapsing fever ticks), this protein is Zinc finger protein B385R.